We begin with the raw amino-acid sequence, 183 residues long: Translation initiation factor IF-3 (183 aa).

It belongs to the IF-3 family. In terms of assembly, monomer.

The protein resides in the cytoplasm. Its function is as follows. IF-3 binds to the 30S ribosomal subunit and shifts the equilibrium between 70S ribosomes and their 50S and 30S subunits in favor of the free subunits, thus enhancing the availability of 30S subunits on which protein synthesis initiation begins. The protein is Translation initiation factor IF-3 of Pseudomonas entomophila (strain L48).